The sequence spans 78 residues: Large ribosomal subunit protein bL31 (78 aa).

Zn(2+) is bound by residues Cys16, Cys18, Cys38, and Cys41.

Belongs to the bacterial ribosomal protein bL31 family. Type A subfamily. In terms of assembly, part of the 50S ribosomal subunit. Zn(2+) serves as cofactor.

In terms of biological role, binds the 23S rRNA. In Frankia alni (strain DSM 45986 / CECT 9034 / ACN14a), this protein is Large ribosomal subunit protein bL31.